Reading from the N-terminus, the 107-residue chain is Circadian clock oscillator protein KaiB (107 aa).

The protein belongs to the KaiB family. In terms of assembly, may undergo a major conformational rearrangment; in the free state forms homooligomers. When bound to KaiC switches to a monomeric thioredoxin-fold (KaiB(fs)). The active oscillator complex is probably KaiC(6):KaiB(6).

Component of the KaiBC clock protein complex, which constitutes the main circadian regulator in cyanobacteria; it may modify the ATPase activity of KaiC. Functionally, may be a metamorphic protein which reversibly switches between an inactive tetrameric fold and a rare, thioredoxin-like monomeric fold (KaiB(fs)). KaiB(fs) binds phospho-KaiC, and perhaps clock output effectors. The protein is Circadian clock oscillator protein KaiB of Prochlorococcus marinus (strain NATL2A).